The sequence spans 179 residues: Large ribosomal subunit protein uL10 (179 aa).

The protein belongs to the universal ribosomal protein uL10 family. In terms of assembly, part of the ribosomal stalk of the 50S ribosomal subunit. The N-terminus interacts with L11 and the large rRNA to form the base of the stalk. The C-terminus forms an elongated spine to which L12 dimers bind in a sequential fashion forming a multimeric L10(L12)X complex.

Its function is as follows. Forms part of the ribosomal stalk, playing a central role in the interaction of the ribosome with GTP-bound translation factors. The chain is Large ribosomal subunit protein uL10 from Symbiobacterium thermophilum (strain DSM 24528 / JCM 14929 / IAM 14863 / T).